A 356-amino-acid polypeptide reads, in one-letter code: Cyanide hydratase (356 aa).

The 276-residue stretch at 15–290 (FKVAAVQAEP…EVVLYANISL (276 aa)) folds into the CN hydrolase domain. Glutamate 55 (proton acceptor) is an active-site residue. The active site involves lysine 137. Catalysis depends on cysteine 172, which acts as the Nucleophile. Positions 331–356 (DEQAASKAQQAEIDNAGKGSIVPSKL) are disordered.

It belongs to the carbon-nitrogen hydrolase superfamily. Nitrilase family.

The enzyme catalyses formamide = hydrogen cyanide + H2O. Catalyzes the hydration of cyanide to formamide. Degradation of cyanide may be important for plant pathogenic fungi in infection of cyanogenic plants. The chain is Cyanide hydratase from Armillaria gallica (Bulbous honey fungus).